The chain runs to 294 residues: ATP synthase gamma chain (294 aa).

The protein belongs to the ATPase gamma chain family. In terms of assembly, F-type ATPases have 2 components, CF(1) - the catalytic core - and CF(0) - the membrane proton channel. CF(1) has five subunits: alpha(3), beta(3), gamma(1), delta(1), epsilon(1). CF(0) has three main subunits: a, b and c.

It is found in the cell inner membrane. In terms of biological role, produces ATP from ADP in the presence of a proton gradient across the membrane. The gamma chain is believed to be important in regulating ATPase activity and the flow of protons through the CF(0) complex. This chain is ATP synthase gamma chain, found in Nitrosomonas europaea (strain ATCC 19718 / CIP 103999 / KCTC 2705 / NBRC 14298).